The chain runs to 190 residues: Putative protein p47 (190 aa).

In Escherichia coli (Bacteriophage APSE-1), this protein is Putative protein p47 (47).